Reading from the N-terminus, the 330-residue chain is D-alanine--D-alanine ligase (330 aa).

The ATP-grasp domain occupies 120-326; sequence KLWLSALDIP…FKQFLEGIIR (207 aa). Residue 150 to 205 coordinates ATP; it reads AFRNWGAVFVKAASQGSSVGCYKVTDAAKLSEAVNAAFGYSDQVLVEKAVRPRELE. Residues Asp280, Glu293, and Asn295 each coordinate Mg(2+).

Belongs to the D-alanine--D-alanine ligase family. It depends on Mg(2+) as a cofactor. Mn(2+) serves as cofactor.

It localises to the cytoplasm. It carries out the reaction 2 D-alanine + ATP = D-alanyl-D-alanine + ADP + phosphate + H(+). The protein operates within cell wall biogenesis; peptidoglycan biosynthesis. Functionally, cell wall formation. This is D-alanine--D-alanine ligase from Tolumonas auensis (strain DSM 9187 / NBRC 110442 / TA 4).